A 118-amino-acid chain; its full sequence is Large ribosomal subunit protein uL18 (118 aa).

The protein belongs to the universal ribosomal protein uL18 family. As to quaternary structure, part of the 50S ribosomal subunit; part of the 5S rRNA/L5/L18/L25 subcomplex. Contacts the 5S and 23S rRNAs.

Its function is as follows. This is one of the proteins that bind and probably mediate the attachment of the 5S RNA into the large ribosomal subunit, where it forms part of the central protuberance. The polypeptide is Large ribosomal subunit protein uL18 (Cupriavidus pinatubonensis (strain JMP 134 / LMG 1197) (Cupriavidus necator (strain JMP 134))).